Reading from the N-terminus, the 880-residue chain is MNKLIYYFGNNGSDGNASMKNILGNKGAGLAEMSNLKLPIPNGFTITTELCNYFYKHNNNLPKNFQNELQQAITKLEITTGKIFGSTTSNPLLLSVRSGSTVSMPGMMDTILNLGMNNEVCNALADSCGNKLFALDSYRRFLEMYGSTVLSIPSDLFEQIYEKHKVQADIYKDSDITVELLEKIIDDFKRLHIKYTKQLIKDPYEQLESAIKAVLYSWKNNRAIVYRKLNNISEDFGTAINIQEMVFGNLGKTSATGVVFTRSPSTGEKKLFGEFLINAQGEDIVSGTRTPMPIIANDSNSMQAMMPEVFTKLSQIAKKLEEHYLDMQDIEFTIENNKLYILQTRTAKRTAIAAINIAVQMVEEKLISKEQALMRIDPESLNQLLHTRIDYSKKLTAIAEGLPASPGAATGIVVFSPYDAEKLSHHHKVILVRHDTSPEDINGMHVASGILTIRGGMTSHAAVVARGMGKPCVCGTNNLSIDEQKQILIAGDIVIKQGDIITIDGGSGKIFLGEMPLIQPTFSEESTLILDWADEISSLKVRANAETVNDALVSIKFGAQGIGLCRSEHMFFDKNKIPLVREMIIAPDIERRQCALQKLLPLQTEDFKALFRVMKNKPVNIRLLDPPLHEFLPTTDEDKKNLAHSLNLPLSMIHQRLHAMHEVNPMLGHRGCRLGICLPEIYQMQIEAILTAIFELHKKEHIESNLELMIPLISNVAEIKKLKMDIYAVVKKLEQRYSYKFSFTLGTMIELPRAALGSKKIAKEVDYFSFGTNDLTQTTYGISRDDIASFLPYYLEEKIFESDPFTTLDEEGVGELIKIAIKRGKSSNANLKLGACGEHAGNPTSIAFFHKMNLNYVSCSPYRIPIARIAAAQAKIKQGS.

The segment at 1–348 (MNKLIYYFGN…LYILQTRTAK (348 aa)) is N-terminal. Arg-97 contributes to the ATP binding site. The linker 1 stretch occupies residues 349–405 (RTAIAAINIAVQMVEEKLISKEQALMRIDPESLNQLLHTRIDYSKKLTAIAEGLPAS). The central stretch occupies residues 406 to 503 (PGAATGIVVF…VIKQGDIITI (98 aa)). Residue Thr-458 is modified to Phosphothreonine; by PDRP1. Catalysis depends on His-460, which acts as the Tele-phosphohistidine intermediate. The interval 504–538 (DGGSGKIFLGEMPLIQPTFSEESTLILDWADEISS) is linker 2. The tract at residues 539 to 879 (LKVRANAETV…AAAQAKIKQG (341 aa)) is C-terminal. Arg-566, Arg-622, Glu-750, Gly-771, Thr-772, Asn-773, and Asp-774 together coordinate substrate. Glu-750 lines the Mg(2+) pocket. Position 774 (Asp-774) interacts with Mg(2+). The Proton donor role is filled by Cys-836.

The protein belongs to the PEP-utilizing enzyme family. As to quaternary structure, homodimer. Mg(2+) serves as cofactor. Post-translationally, phosphorylation of Thr-458 in the dark inactivates the enzyme. Dephosphorylation upon light stimulation reactivates the enzyme.

It carries out the reaction pyruvate + phosphate + ATP = phosphoenolpyruvate + AMP + diphosphate + H(+). Activated by light-induced dephosphorylation. Inhibited by dark-induced phosphorylation. Both reactions are catalyzed by PDRP1. Its function is as follows. Catalyzes the reversible phosphorylation of pyruvate and phosphate. The chain is Pyruvate, phosphate dikinase (ppdK) from Rickettsia typhi (strain ATCC VR-144 / Wilmington).